The following is a 392-amino-acid chain: MDDKKNEDLEMRNFNGRSSPSQRDPFLAKPGAAAKRGNSAFDLSNVTNSPGISILAYCLASISMTVTNKYCVSGSNWNLNFFYLAIQSVVCIIAIIICKQAGLITNLAPFDTKKAKTWFPISLLLVGMIYTSTKALQFLSVPVYTIFKNLTIIVIAYGEVLWFGGSVTPSALFSFGLMVLSSVVAAWADIQHALYGGGAAQSAEAAAALSTLNAGYAWMGMNVFCTAAYVLSMRKVIKKMNFKDWDTMFYNNLLTIPVLFVCSFIFENWSSENLTKNFPLETRNNLILGMIYSGLATIFISYCSAWCIRVTSSTTYSMVGALNKLPIAVSGLVFFAAPVTFGSVSAIFIGFVSGIVYAWAKVRQNQSKGNILPTTQPVMSASSQSNRDAAKA.

Basic and acidic residues predominate over residues methionine 1–methionine 11. The tract at residues methionine 1–proline 25 is disordered. Topologically, residues methionine 1–asparagine 45 are cytoplasmic. A helical transmembrane segment spans residues valine 46–valine 66. Over threonine 67–asparagine 76 the chain is Lumenal. Residues tryptophan 77–isoleucine 97 form a helical membrane-spanning segment. The Cytoplasmic portion of the chain corresponds to cysteine 98–lysine 116. The chain crosses the membrane as a helical span at residues threonine 117 to leucine 139. The Lumenal segment spans residues serine 140–proline 142. A helical membrane pass occupies residues valine 143–glycine 165. The Cytoplasmic portion of the chain corresponds to serine 166–alanine 171. A helical transmembrane segment spans residues leucine 172–glutamine 191. At histidine 192–serine 210 the chain is on the lumenal side. The chain crosses the membrane as a helical span at residues threonine 211–leucine 231. Topologically, residues serine 232–aspartate 246 are cytoplasmic. Residues threonine 247–glutamate 267 form a helical membrane-spanning segment. Asparagine 268 and asparagine 273 each carry an N-linked (GlcNAc...) asparagine glycan. The Lumenal segment spans residues asparagine 268–asparagine 285. Residues leucine 286–tryptophan 306 traverse the membrane as a helical segment. The Cytoplasmic segment spans residues cysteine 307–threonine 314. A helical membrane pass occupies residues threonine 315 to alanine 337. Residues proline 338 to threonine 340 lie on the Lumenal side of the membrane. A helical transmembrane segment spans residues phenylalanine 341 to alanine 360. Topologically, residues lysine 361–alanine 392 are cytoplasmic. Positions proline 373–alanine 392 are disordered.

It belongs to the TPT transporter family. SLC35D subfamily. As to quaternary structure, homooligomer.

Its subcellular location is the golgi apparatus membrane. It localises to the cytoplasmic vesicle membrane. The protein resides in the endoplasmic reticulum membrane. Involved in the import of GDP-mannose from the cytoplasm into the Golgi lumen. The chain is GDP-mannose transporter (gmt1) from Botryotinia fuckeliana (strain B05.10) (Noble rot fungus).